A 434-amino-acid polypeptide reads, in one-letter code: MLKIYNSLSNKIEEFKPIHEKKVNMYVCGPTVYDDIHIGNGRPVVFFDVVKRYLQYLDYGVKYASNITDVDDKIIDRAQKLHITEKELATTYTNNFFEIAKKIGGYNFDVTPHATNYIEEMIKFIGELISDGFAYKTQSGVYFRVDKIKDYGILSNQQVKDLKTGVRIDLETDKEKDYDFALWKNTEEGIKYHAPWGDGRPGWHTECVVMTNEIFGGEIDIHGGGFDLKFPHHENEIAQSVAKHDHHLAKYWMHVGRLDLANEKMSKSLGNDIKLKDLVQVYNPNAYRLMLLAHHYRAPIQFSDDLIEQYQKAYDKISYTLNKWHFHMILNNINENGLDHESMEYFEGFMNDDFATPRVISLIDKLIKDLNKAFKVENYNTIIQILSTLGINPNILEVLEDDIQNYNNWQQARLEKNYEKADIYRKPLLDKGFI.

Cys-28 is a binding site for Zn(2+). A 'HIGH' region motif is present at residues 30–40 (PTVYDDIHIGN). The Zn(2+) site is built by Cys-207, His-232, and Glu-236. The 'KMSKS' region motif lies at 264-268 (KMSKS). Lys-267 lines the ATP pocket.

This sequence belongs to the class-I aminoacyl-tRNA synthetase family. As to quaternary structure, monomer. It depends on Zn(2+) as a cofactor.

It localises to the cytoplasm. The enzyme catalyses tRNA(Cys) + L-cysteine + ATP = L-cysteinyl-tRNA(Cys) + AMP + diphosphate. This Acholeplasma laidlawii (strain PG-8A) protein is Cysteine--tRNA ligase.